A 795-amino-acid polypeptide reads, in one-letter code: RalBP1-associated Eps domain-containing protein 1 (795 aa).

Residues 10-113 (EQKYYSDLFS…SKNEQESRLA (104 aa)) form the EH 1 domain. The segment at 112-238 (LAASYSSDSE…NWVSFADTPP (127 aa)) is disordered. Polar residues predominate over residues 115–126 (SYSSDSENQGSY). Residues Ser-145, Ser-162, Ser-166, and Ser-170 each carry the phosphoserine modification. Residues 156–168 (EQQEPVSPVVSPQ) are compositionally biased toward low complexity. Thr-173 bears the Phosphothreonine mark. The segment covering 205–216 (GDAQAGSSAGDA) has biased composition (low complexity). Ser-272 and Ser-273 each carry phosphoserine. Positions 285 to 374 (QRQYYVNQFK…ESLMPKLIDL (90 aa)) constitute an EH 2 domain. Phosphotyrosine is present on Tyr-288. Ser-307 is subject to Phosphoserine. Residues 318-353 (LPILELSHIWELSDFDKDGALTLDEFCAAFHLVVAR) enclose the EF-hand domain. 4 residues coordinate Ca(2+): Asp-331, Asp-333, Asp-335, and Glu-342. 2 disordered regions span residues 380–433 (VGEQ…SSQT) and 469–720 (ELKR…DEHT). Residues 407 to 433 (LNQTWPELNQSSEQWETFSERSSSSQT) are compositionally biased toward polar residues. 3 positions are modified to phosphoserine: Ser-475, Ser-482, and Ser-489. 2 stretches are compositionally biased toward polar residues: residues 497–518 (INSS…SDSF) and 525–542 (IGSS…SPDN). Position 539 is a phosphoserine (Ser-539). Thr-543 carries the phosphothreonine modification. Positions 543–553 (TAPPPPPPRPQ) are enriched in pro residues. Ser-561 bears the Phosphoserine mark. A compositionally biased stretch (polar residues) spans 562–573 (LDMNRTFAVTTG). Over residues 574 to 583 (QQQAGVVAHP) the composition is skewed to low complexity. Pro residues predominate over residues 584 to 595 (PAVPPRPQPSQA). 2 stretches are compositionally biased toward polar residues: residues 611-622 (THTSTSPQQIPE) and 681-692 (ATNVPANVSKGT). Residues 651 to 795 (HPEVLPAEKA…LEQLRPFSHL (145 aa)) form an interaction with RALBP1 region. Residues 707-720 (KSEDELRPDVDEHT) are compositionally biased toward basic and acidic residues. Phosphoserine is present on residues Ser-708 and Ser-739. Residues 750–790 (SIRRNKETNTVLARLNSELQQQLKDVLEERISLEVQLEQLR) adopt a coiled-coil conformation.

As to quaternary structure, homodimer (Potential). Interacts with RALBP1, CRK and GRB2. Binding to RALBP1 does not affect its Ral-binding activity. Forms a complex with the SH3 domains of CRK and GRB2 which may link it to an EGF-responsive tyrosine kinase. Interacts with RAB11FIP2. Interacts with AMPH, ITSN1 (via SH3 domains) and SGIP1; may be involved in clathrin-mediated endocytosis. Post-translationally, EGF stimulates phosphorylation on Tyr-residues. As to expression, expressed in all tissues examined. The highest level expression was found in the kidney and testis.

It localises to the membrane. Its subcellular location is the clathrin-coated pit. May coordinate the cellular actions of activated EGF receptors and Ral-GTPases. The chain is RalBP1-associated Eps domain-containing protein 1 (Reps1) from Mus musculus (Mouse).